We begin with the raw amino-acid sequence, 207 residues long: Urease accessory protein UreG (207 aa).

A GTP-binding site is contributed by 14-21 (GPVGSGKT).

Belongs to the SIMIBI class G3E GTPase family. UreG subfamily. As to quaternary structure, homodimer. UreD, UreF and UreG form a complex that acts as a GTP-hydrolysis-dependent molecular chaperone, activating the urease apoprotein by helping to assemble the nickel containing metallocenter of UreC. The UreE protein probably delivers the nickel.

The protein localises to the cytoplasm. Facilitates the functional incorporation of the urease nickel metallocenter. This process requires GTP hydrolysis, probably effectuated by UreG. The polypeptide is Urease accessory protein UreG (Chelativorans sp. (strain BNC1)).